A 211-amino-acid chain; its full sequence is Large ribosomal subunit protein uL3 (211 aa).

Q150 carries the N5-methylglutamine modification.

Belongs to the universal ribosomal protein uL3 family. In terms of assembly, part of the 50S ribosomal subunit. Forms a cluster with proteins L14 and L19. Methylated by PrmB.

One of the primary rRNA binding proteins, it binds directly near the 3'-end of the 23S rRNA, where it nucleates assembly of the 50S subunit. This Pseudomonas fluorescens (strain SBW25) protein is Large ribosomal subunit protein uL3.